Consider the following 310-residue polypeptide: p-hydroxybenzoic acid efflux pump subunit AaeA (310 aa).

Residues 12-32 (AITLVLVILAFIAIFRAWVYY) traverse the membrane as a helical segment.

It belongs to the membrane fusion protein (MFP) (TC 8.A.1) family.

It localises to the cell inner membrane. Forms an efflux pump with AaeB. The protein is p-hydroxybenzoic acid efflux pump subunit AaeA of Salmonella gallinarum (strain 287/91 / NCTC 13346).